Consider the following 882-residue polypeptide: Alanine--tRNA ligase (882 aa).

Residues H574, H578, C682, and H686 each coordinate Zn(2+). Residues 853–882 form a disordered region; it reads GGRGGGKGALAQGGGLDPRKAREALPGLLP. Gly residues predominate over residues 854-868; the sequence is GRGGGKGALAQGGGL.

The protein belongs to the class-II aminoacyl-tRNA synthetase family. Zn(2+) is required as a cofactor.

It localises to the cytoplasm. The enzyme catalyses tRNA(Ala) + L-alanine + ATP = L-alanyl-tRNA(Ala) + AMP + diphosphate. Catalyzes the attachment of alanine to tRNA(Ala) in a two-step reaction: alanine is first activated by ATP to form Ala-AMP and then transferred to the acceptor end of tRNA(Ala). Also edits incorrectly charged Ser-tRNA(Ala) and Gly-tRNA(Ala) via its editing domain. This Thermus thermophilus (strain ATCC BAA-163 / DSM 7039 / HB27) protein is Alanine--tRNA ligase.